The primary structure comprises 637 residues: Chaperone protein HtpG (637 aa).

The interval M1–R345 is a; substrate-binding. Positions E346–K562 are b. Positions L563–K637 are c.

This sequence belongs to the heat shock protein 90 family. In terms of assembly, homodimer.

Its subcellular location is the cytoplasm. Its function is as follows. Molecular chaperone. Has ATPase activity. This Shewanella baltica (strain OS185) protein is Chaperone protein HtpG.